A 106-amino-acid chain; its full sequence is 1-deoxy-D-xylulose 5-phosphate reductoisomerase (106 aa).

Residue Asp3 coordinates Mn(2+). The 1-deoxy-D-xylulose 5-phosphate site is built by Ser4, Glu5, Ser29, His52, Ser65, Asn70, Lys71, and Glu74. Glu5 serves as a coordination point for Mn(2+). Glu74 contacts Mn(2+).

The protein belongs to the DXR family. The cofactor is Mn(2+). It depends on Mg(2+) as a cofactor.

The protein resides in the plastid. It is found in the chloroplast stroma. The catalysed reaction is 2-C-methyl-D-erythritol 4-phosphate + NADP(+) = 1-deoxy-D-xylulose 5-phosphate + NADPH + H(+). It functions in the pathway isoprenoid biosynthesis; isopentenyl diphosphate biosynthesis via DXP pathway; isopentenyl diphosphate from 1-deoxy-D-xylulose 5-phosphate: step 1/6. Its function is as follows. Enzyme of the plastid non-mevalonate pathway for isoprenoid biosynthesis that catalyzes the NADPH-dependent rearrangement and reduction of 1-deoxy-D-xylulose-5-phosphate (DXP) to 2-C-methyl-D-erythritol 4-phosphate (MEP). Required for chloroplast development. The sequence is that of 1-deoxy-D-xylulose 5-phosphate reductoisomerase from Origanum vulgare (Wild marjoram).